A 392-amino-acid chain; its full sequence is MKKAYYGDFGGQFLPESAMFALNELENAFLKFSKDKFFKKELSELLKTYVGRPTPLYFARNLSKKYQHEIYLKREDLNHTGAHKINNAIAQALLAKKMGKKKIIAETGAGQHGLATATAAALLGLECEIYMGATDVQRQALNVYKMELLGAKIHAVQSGLKTLKEATTAAIQAWVGDIKNIFYVVGSAVGPYPYPKMVTHFQSIIGKECKMQLQKLNKKVDYIIAAVGGGSNAAGIFYDFIKDENVKLIGIEAGGLGVDTLYHAATLNKGETGIIHGMKTKVLQDDLGNILPVHSVSAGLDYPGIGPLHAFLFESKRAQYHAISDEECMQALKLLCKEEGIIAAIESSHALAFLEKLCPTLKKKSVIVINLSGRGDKDMQMIREYKKGVIYG.

Lys84 bears the N6-(pyridoxal phosphate)lysine mark.

Belongs to the TrpB family. In terms of assembly, tetramer of two alpha and two beta chains. Pyridoxal 5'-phosphate serves as cofactor.

The enzyme catalyses (1S,2R)-1-C-(indol-3-yl)glycerol 3-phosphate + L-serine = D-glyceraldehyde 3-phosphate + L-tryptophan + H2O. Its pathway is amino-acid biosynthesis; L-tryptophan biosynthesis; L-tryptophan from chorismate: step 5/5. The beta subunit is responsible for the synthesis of L-tryptophan from indole and L-serine. This is Tryptophan synthase beta chain from Campylobacter jejuni subsp. doylei (strain ATCC BAA-1458 / RM4099 / 269.97).